Here is a 657-residue protein sequence, read N- to C-terminus: UvrABC system protein B (657 aa).

The Helicase ATP-binding domain occupies 24–409; that stretch reads AGVRNQVKSQ…SGHIVQQIIR (386 aa). 37 to 44 contacts ATP; the sequence is GTTGSGKT. The Beta-hairpin signature appears at 90-113; it reads YYDYYQPEAYIARSDTYIEKSLLI. The Helicase C-terminal domain maps to 426–589; the sequence is QVDDLLEEIR…IVPKPIIKAI (164 aa). The region spanning 617 to 652 is the UVR domain; the sequence is EEQIKKYEALMQRAAKEFRFNEAAKYRDAMQACKEQ.

Belongs to the UvrB family. Forms a heterotetramer with UvrA during the search for lesions. Interacts with UvrC in an incision complex.

The protein localises to the cytoplasm. Its function is as follows. The UvrABC repair system catalyzes the recognition and processing of DNA lesions. A damage recognition complex composed of 2 UvrA and 2 UvrB subunits scans DNA for abnormalities. Upon binding of the UvrA(2)B(2) complex to a putative damaged site, the DNA wraps around one UvrB monomer. DNA wrap is dependent on ATP binding by UvrB and probably causes local melting of the DNA helix, facilitating insertion of UvrB beta-hairpin between the DNA strands. Then UvrB probes one DNA strand for the presence of a lesion. If a lesion is found the UvrA subunits dissociate and the UvrB-DNA preincision complex is formed. This complex is subsequently bound by UvrC and the second UvrB is released. If no lesion is found, the DNA wraps around the other UvrB subunit that will check the other stand for damage. The polypeptide is UvrABC system protein B (Chlamydia pneumoniae (Chlamydophila pneumoniae)).